The following is a 193-amino-acid chain: D-alanyl-D-alanine dipeptidase (193 aa).

Residues His-98 and Asp-105 each coordinate Zn(2+). Glu-162 (proton donor/acceptor) is an active-site residue. His-165 contributes to the Zn(2+) binding site.

This sequence belongs to the peptidase M15D family. The cofactor is Zn(2+).

The protein resides in the cytoplasm. The catalysed reaction is D-alanyl-D-alanine + H2O = 2 D-alanine. Its function is as follows. Catalyzes hydrolysis of the D-alanyl-D-alanine dipeptide. May have a role in cell-wall turnover. The chain is D-alanyl-D-alanine dipeptidase from Escherichia coli (strain K12).